We begin with the raw amino-acid sequence, 892 residues long: DNA mismatch repair protein MutS (892 aa).

607–614 contacts ATP; sequence GPNMSGKS.

The protein belongs to the DNA mismatch repair MutS family.

This protein is involved in the repair of mismatches in DNA. It is possible that it carries out the mismatch recognition step. This protein has a weak ATPase activity. This chain is DNA mismatch repair protein MutS, found in Bacillus cereus (strain G9842).